A 90-amino-acid chain; its full sequence is DNA-directed RNA polymerase subunit omega (90 aa).

It belongs to the RNA polymerase subunit omega family. As to quaternary structure, the RNAP catalytic core consists of 2 alpha, 1 beta, 1 beta' and 1 omega subunit. When a sigma factor is associated with the core the holoenzyme is formed, which can initiate transcription.

The enzyme catalyses RNA(n) + a ribonucleoside 5'-triphosphate = RNA(n+1) + diphosphate. Functionally, promotes RNA polymerase assembly. Latches the N- and C-terminal regions of the beta' subunit thereby facilitating its interaction with the beta and alpha subunits. The sequence is that of DNA-directed RNA polymerase subunit omega from Saccharophagus degradans (strain 2-40 / ATCC 43961 / DSM 17024).